The chain runs to 192 residues: E3 ubiquitin-protein ligase RNF185 (192 aa).

The segment covering 1–27 has biased composition (low complexity); the sequence is MASKGPSASASPENSSAGGPSGSSNGA. Positions 1 to 30 are disordered; sequence MASKGPSASASPENSSAGGPSGSSNGAGES. The Cytoplasmic portion of the chain corresponds to 1–130; sequence MASKGPSASA…GGFQGFGFGD (130 aa). The tract at residues 29-80 is required for ubiquitin ligase activity and protection against ER stress-induced cell death; sequence ESGGQDSTFECNICLDTAKDAVISLCGHLFCWPCLHQWLETRPNRQVCPVCK. The segment at 39 to 80 adopts an RING-type zinc-finger fold; the sequence is CNICLDTAKDAVISLCGHLFCWPCLHQWLETRPNRQVCPVCK. The interval 90–123 is disordered; it reads PLYGRGSTGQQDPREKTPPRPQGQRPEPENRGGF. The chain crosses the membrane as a helical span at residues 131 to 151; that stretch reads GGFQMSFGIGAFPFGIFATAF. The Mitochondrial intermembrane portion of the chain corresponds to 152–171; that stretch reads NINDGRPPPAVPGTPQYVDE. Residues 172–192 form a helical membrane-spanning segment; the sequence is QFLSRLFLFVALVIMFWLLIA.

Interacts with ATG5 and BNIP1. As to expression, ubiquitously expressed.

The protein localises to the mitochondrion outer membrane. It localises to the endoplasmic reticulum membrane. It carries out the reaction S-ubiquitinyl-[E2 ubiquitin-conjugating enzyme]-L-cysteine + [acceptor protein]-L-lysine = [E2 ubiquitin-conjugating enzyme]-L-cysteine + N(6)-ubiquitinyl-[acceptor protein]-L-lysine.. It functions in the pathway protein modification; protein ubiquitination. Functionally, E3 ubiquitin-protein ligase that regulates selective mitochondrial autophagy by mediating 'Lys-63'-linked polyubiquitination of BNIP1. Acts in the endoplasmic reticulum (ER)-associated degradation (ERAD) pathway, which targets misfolded proteins that accumulate in the endoplasmic reticulum (ER) for ubiquitination and subsequent proteasome-mediated degradation. Protects cells from ER stress-induced apoptosis. Responsible for the cotranslational ubiquitination and degradation of CFTR in the ERAD pathway. Also acts as a regulator of the innate antiviral response by catalyzing 'Lys-27'-linked polyubiquitination of CGAS at 'Lys-173' and 'Lys-384', thereby promoting CGAS cyclic GMP-AMP synthase activity. Preferentially associates with the E2 enzymes UBE2J1 and UBE2J2. The sequence is that of E3 ubiquitin-protein ligase RNF185 from Homo sapiens (Human).